The chain runs to 217 residues: Vesicle transport through interaction with t-SNAREs homolog 1A (217 aa).

The Cytoplasmic portion of the chain corresponds to 1-192; it reads MDVFERTEQN…TGIARRLATN (192 aa). The stretch at 36–97 forms a coiled coil; that stretch reads AVREVENDID…AQLQSSNQTN (62 aa). The disordered stretch occupies residues 90-109; that stretch reads LQSSNQTNSNPWSNAPDDYQ. A t-SNARE coiled-coil homology domain is found at 123–185; that stretch reads SNMLDSTSDR…KSARKIMTGI (63 aa). A helical; Anchor for type IV membrane protein transmembrane segment spans residues 193–213; sequence KVILSIIILLLMGIIALIICL. Over 214 to 217 the chain is Vesicular; the sequence is KWLR.

Belongs to the VTI1 family. In terms of assembly, component of the SNARE complex composed of syn7A, syn8A, vamp7A and vti1A.

Its subcellular location is the membrane. It is found in the cytoplasmic vesicle. The protein resides in the secretory vesicle membrane. The protein localises to the clathrin-coated vesicle membrane. It localises to the endosome membrane. Its subcellular location is the endoplasmic reticulum membrane. V-SNARE that mediates vesicle transport pathways through interactions with t-SNAREs on the target membrane. These interactions are proposed to mediate aspects of the specificity of vesicle trafficking and to promote fusion of the lipid bilayers. In Dictyostelium discoideum (Social amoeba), this protein is Vesicle transport through interaction with t-SNAREs homolog 1A.